We begin with the raw amino-acid sequence, 457 residues long: Argininosuccinate lyase (457 aa).

It belongs to the lyase 1 family. Argininosuccinate lyase subfamily.

Its subcellular location is the cytoplasm. The catalysed reaction is 2-(N(omega)-L-arginino)succinate = fumarate + L-arginine. It participates in amino-acid biosynthesis; L-arginine biosynthesis; L-arginine from L-ornithine and carbamoyl phosphate: step 3/3. In Psychrobacter arcticus (strain DSM 17307 / VKM B-2377 / 273-4), this protein is Argininosuccinate lyase.